Consider the following 305-residue polypeptide: MDLEMMLDEDYKEGICLIDFSQIALSTALVNFPDKEKINLSMVRHLILNSIKFNVKKAKTLGYTKIVLCIDNAKSGYWRRDFAYYYKKNRGKAREESTWDWEGYFESSHKVIDELKAYMPYIVMDIDKYEADDHIAVLVKKFSLEGHKILIISSDGDFTQLHKYPNVKQWSPMHKKWVKIKSGSAEIDCMTKILKGDKKDNVASVKVRSDFWFTRVEGERTPSMKTSIVEAIANDREQAKVLLTESEYNRYKENLVLIDFDYIPDNIASNIVNYYNSYKLPPRGKIYSYFVKAGLSKLTNSINEF.

The enzyme catalyses Endonucleolytic cleavage to 5'-phosphomonoester.. In terms of biological role, plays essential roles in DNA replication by removing the RNA primers from lagging strand fragments. Exhibits 5'to 3' exonuclease activity on either RNA/DNA or DNA/DNA duplexes and endonuclease activity on either flap or fork DNA structures. The sequence is that of Ribonuclease H (rnh) from Enterobacteria phage T4 (Bacteriophage T4).